Reading from the N-terminus, the 407-residue chain is S-adenosylmethionine synthase (407 aa).

ATP is bound at residue histidine 15. Aspartate 17 is a binding site for Mg(2+). Position 43 (glutamate 43) interacts with K(+). Positions 56 and 99 each coordinate L-methionine. A flexible loop region spans residues 99 to 109 (QSPDIARGVDT). The disordered stretch occupies residues 112–131 (ERRGGGTAPGGPGDELDRQG). ATP is bound by residues 179–181 (DGK), 252–253 (RF), aspartate 261, 267–268 (RK), alanine 284, and lysine 288. Residue aspartate 261 participates in L-methionine binding. Position 292 (lysine 292) interacts with L-methionine.

Belongs to the AdoMet synthase family. As to quaternary structure, homotetramer; dimer of dimers. Mg(2+) serves as cofactor. It depends on K(+) as a cofactor.

Its subcellular location is the cytoplasm. It catalyses the reaction L-methionine + ATP + H2O = S-adenosyl-L-methionine + phosphate + diphosphate. Its pathway is amino-acid biosynthesis; S-adenosyl-L-methionine biosynthesis; S-adenosyl-L-methionine from L-methionine: step 1/1. In terms of biological role, catalyzes the formation of S-adenosylmethionine (AdoMet) from methionine and ATP. The overall synthetic reaction is composed of two sequential steps, AdoMet formation and the subsequent tripolyphosphate hydrolysis which occurs prior to release of AdoMet from the enzyme. The protein is S-adenosylmethionine synthase of Streptomyces fradiae (Streptomyces roseoflavus).